The primary structure comprises 419 residues: Phospholipase A1-IIgamma (419 aa).

2 coiled-coil regions span residues 1 to 21 (MKRK…EFAK) and 207 to 227 (NARD…KDEE). Serine 236 serves as the catalytic Acyl-ester intermediate. Catalysis depends on charge relay system residues serine 236, aspartate 302, and histidine 339.

Belongs to the AB hydrolase superfamily. Lipase family. In terms of tissue distribution, expressed in seedlings, stems and siliques, and, to a lower extent, in flowers.

It is found in the cytoplasm. In terms of biological role, acylhydrolase that catalyzes the hydrolysis of 1,3-diacylglycerol (1,3-DAG) and 1-monoacylglycerol (1-MAG) at the sn-1 position. High activity toward 1,3-DAG and 1-MAG, but low activity toward 1,2-diacylglycerol (1,2-DAG) and 1-lysophosphatidylcholine (1-LPC), and no activity toward phosphatidylcholine (PC), monogalactosyldiacylglycerol (MGDG), digalactosyldiacylglycerol (DGDG), triacylglycerol (TAG) and 2-monoacylglycerol (2-MAG). May be involved in the negative regulation of seedling establishment by inhibiting the breakdown, beta-oxidation and mobilization of seed storage oils. This chain is Phospholipase A1-IIgamma (DSEL), found in Arabidopsis thaliana (Mouse-ear cress).